Consider the following 317-residue polypeptide: MNQLESLKQFTTIVADSGDIELIRHYTPQDTTTNPSLILKATSLSYYQNMLEDVLAYARKQSGNHNAKMRAASDKLAVNIGLEILKIIPGRISTEIDARFSFNSDMCINHAHKIVSLYQEQGINKSRVLIKLASTWEGIKAAEELEKAGINCNLTLIFSFAQARACAEANVYLISPFVGRIYDWYNQRKLLTEDSYDREDPGVKSVHKIYDYYKQHRYQTIVMGASFRKIDQILALAGCDYLTISPVLLEKLRSSYQHVERQLFPATKFFHKPIPLSESQFRWEHNQDAMAVDQLADGIRKFALDQYNIEKILAKKL.

K131 serves as the catalytic Schiff-base intermediate with substrate.

This sequence belongs to the transaldolase family. Type 1 subfamily. In terms of assembly, homodimer.

The protein resides in the cytoplasm. The catalysed reaction is D-sedoheptulose 7-phosphate + D-glyceraldehyde 3-phosphate = D-erythrose 4-phosphate + beta-D-fructose 6-phosphate. It participates in carbohydrate degradation; pentose phosphate pathway; D-glyceraldehyde 3-phosphate and beta-D-fructose 6-phosphate from D-ribose 5-phosphate and D-xylulose 5-phosphate (non-oxidative stage): step 2/3. In terms of biological role, transaldolase is important for the balance of metabolites in the pentose-phosphate pathway. The sequence is that of Transaldolase from Baumannia cicadellinicola subsp. Homalodisca coagulata.